A 630-amino-acid chain; its full sequence is A-type voltage-gated potassium channel KCND2 (630 aa).

Topologically, residues 1-184 (MAAGVAAWLP…FENPHTSTMA (184 aa)) are cytoplasmic. The segment at 2–20 (AAGVAAWLPFARAAAIGWM) is interaction with KCNIP1, KCNIP2, and other family members. T38 is modified (phosphothreonine). Residues 71 to 90 (ERDFFYHPETQQYFFDRDPD) form an interaction with KCNIP1 region. Zn(2+) contacts are provided by H105, C111, C132, and C133. The helical transmembrane segment at 185-206 (LVFYYVTGFFIAVSVIANVVET) threads the bilayer. Topologically, residues 207-226 (VPCGSSPGHIKELPCGERYA) are extracellular. The helical transmembrane segment at 227-249 (VAFFCLDTACVMIFTVEYLLRLA) threads the bilayer. Residues 250–256 (AAPSRYR) lie on the Cytoplasmic side of the membrane. Residues 257–281 (FVRSVMSIIDVVAILPYYIGLVMTD) traverse the membrane as a helical segment. Topologically, residues 282-287 (NEDVSG) are extracellular. A helical; Voltage-sensor transmembrane segment spans residues 288–307 (AFVTLRVFRVFRIFKFSRHS). Residues 308-321 (QGLRILGYTLKSCA) lie on the Cytoplasmic side of the membrane. The tract at residues 308–321 (QGLRILGYTLKSCA) is S4-S5 linker. The chain crosses the membrane as a helical span at residues 322-345 (SELGFLLFSLTMAIIIFATVMFYA). Over 346–357 (EKGSSASKFTSI) the chain is Extracellular. The helical intramembrane region spans 358-369 (PAAFWYTIVTMT). 4 residues coordinate K(+): T370, L371, G372, and Y373. The Selectivity filter signature appears at 370–375 (TLGYGD). Residues 370–377 (TLGYGDMV) lie within the membrane without spanning it. Over 378–380 (PKT) the chain is Extracellular. Residues 381-403 (IAGKIFGSICSLSGVLVIALPVP) form a helical membrane-spanning segment. At 404–630 (VIVSNFSRIY…GGNIVRVSAL (227 aa)) the chain is on the cytoplasmic side. The tract at residues 474–489 (FETQHHHLLHCLEKTT) is required for dendritic targeting. Residues 474–630 (FETQHHHLLH…GGNIVRVSAL (157 aa)) form an important for normal channel activation and inactivation, for interaction with KCNIP2, and probably other family members as well region. Phosphoserine occurs at positions 548, 552, 572, and 575. Residues 600-622 (IPTPPVTTPEGDDRPESPEYSGG) form a disordered region. Phosphothreonine occurs at positions 602 and 607. S616 carries the phosphoserine modification. Positions 627–630 (VSAL) match the PDZ-binding motif.

This sequence belongs to the potassium channel family. D (Shal) (TC 1.A.1.2) subfamily. Kv4.2/KCND2 sub-subfamily. As to quaternary structure, homotetramer or heterotetramer with KCND1 or KCND3. Associates with the regulatory subunits KCNIP2, KCNIP3 and KCNIP4. Interacts with the regulatory subunit KCNIP1; this interaction mediates the capture of both the N- and C-terminus of KCND2, preventing N-type inactivation and stabilizing the S6 conformation, thereby accelerating closed state inactivation and recovery. In vivo, probably exists as heteromeric complex containing variable proportions of KCND1, KCND2, KCND3, KCNIP1, KCNIP2, KCNIP3, KCNIP4, DPP6 and DPP10. The tetrameric channel can associate with up to four regulatory subunits, such as KCNIP2 or KCNIP4. Interaction with four KCNIP4 chains does not reduce interaction with DPP10. Interacts with DLG4 and NCS1/FREQ. Interacts with DLG1. Probably part of a complex consisting of KCNIP1, KCNIP2 isoform 3 and KCND2. Interacts with FLNA, FLNC and DPP10. Identified in a complex with cAMP-dependent protein kinase (PKA), CAV3, AKAP6 and KCND3 in cardiac myocytes. Interacts (via S1 and S2 helices) with DPP6; this interaction stabilizes the conformation of the S1-S2 helices and facilitates S4 conformational change, including S4 sliding up and down, thereby accelerating activation, inactivation, and recovery. In terms of processing, phosphorylation in response to MAPK activation is increased in stimulated dendrites. Interaction with KCNIP2 and DPP6 propomtes phosphorylation by PKA at Ser-552. Phosphorylation at Ser-552 has no effect on interaction with KCNIP3, but is required for the regulation of channel activity by KCNIP3. Phosphorylation at Ser-552 leads to KCND2 internalization. Phosphorylated by MAPK in response to signaling via the metabotropic glutamate receptor GRM5. Phosphorylation at Ser-616 is required for the down-regulation of neuronal A-type currents in response to signaling via GRM5.

It localises to the cell membrane. Its subcellular location is the cell projection. The protein localises to the dendrite. It is found in the synapse. The protein resides in the perikaryon. It localises to the postsynaptic cell membrane. Its subcellular location is the dendritic spine. The protein localises to the sarcolemma. It is found in the cell junction. The protein resides in the membrane. It localises to the caveola. The enzyme catalyses K(+)(in) = K(+)(out). In terms of biological role, voltage-gated potassium channel that mediates transmembrane potassium transport in excitable membranes, primarily in the brain, but also in rodent heart. Mediates the major part of the dendritic A-type current I(SA) in brain neurons. This current is activated at membrane potentials that are below the threshold for action potentials. It regulates neuronal excitability, prolongs the latency before the first spike in a series of action potentials, regulates the frequency of repetitive action potential firing, shortens the duration of action potentials and regulates the back-propagation of action potentials from the neuronal cell body to the dendrites. Contributes to the regulation of the circadian rhythm of action potential firing in suprachiasmatic nucleus neurons, which regulates the circadian rhythm of locomotor activity. Functions downstream of the metabotropic glutamate receptor GRM5 and plays a role in neuronal excitability and in nociception mediated by activation of GRM5. Mediates the transient outward current I(to) in rodent heart left ventricle apex cells, but not in human heart, where this current is mediated by another family member. Forms tetrameric potassium-selective channels through which potassium ions pass in accordance with their electrochemical gradient. The channel alternates between opened and closed conformations in response to the voltage difference across the membrane. Can form functional homotetrameric channels and heterotetrameric channels that contain variable proportions of KCND2 and KCND3; channel properties depend on the type of pore-forming alpha subunits that are part of the channel. In vivo, membranes probably contain a mixture of heteromeric potassium channel complexes. Interaction with specific isoforms of the regulatory subunits KCNIP1, KCNIP2, KCNIP3 or KCNIP4 strongly increases expression at the cell surface and thereby increases channel activity; it modulates the kinetics of channel activation and inactivation, shifts the threshold for channel activation to more negative voltage values, shifts the threshold for inactivation to less negative voltages and accelerates recovery after inactivation. Likewise, interaction with DPP6 or DPP10 promotes expression at the cell membrane and regulates both channel characteristics and activity. Upon depolarization, the channel goes from a resting closed state (C state) to an activated but non-conducting state (C* state), from there, the channel may either inactivate (I state) or open (O state). In Mustela putorius furo (European domestic ferret), this protein is A-type voltage-gated potassium channel KCND2.